The chain runs to 92 residues: Large ribosomal subunit protein eL31 (92 aa).

Belongs to the eukaryotic ribosomal protein eL31 family.

The chain is Large ribosomal subunit protein eL31 from Desulfurococcus amylolyticus (strain DSM 18924 / JCM 16383 / VKM B-2413 / 1221n) (Desulfurococcus kamchatkensis).